The chain runs to 233 residues: Large ribosomal subunit protein mL67 (233 aa).

Positions 214–233 (RQQAQQSEQQSQSELESQTA) are disordered. The segment covering 215–233 (QQAQQSEQQSQSELESQTA) has biased composition (low complexity).

This sequence belongs to the mitochondrion-specific ribosomal protein mL67 family.

The protein resides in the nucleus. It localises to the mitochondrion. Its function is as follows. Transcription factor involved in regulation of RNA polymerase II-dependent transcription. Also involved in regulation of mitochondrial DNA recombination, maintenance and repair, and generation of homoplasmic cells. The sequence is that of Large ribosomal subunit protein mL67 (MHR1) from Debaryomyces hansenii (strain ATCC 36239 / CBS 767 / BCRC 21394 / JCM 1990 / NBRC 0083 / IGC 2968) (Yeast).